The primary structure comprises 382 residues: Putative phospholipase A1 (382 aa).

A signal peptide spans 1 to 27 (MPTMGAEMNTRNMRYILLTGLLPMASA). Topologically, residues 28–65 (FGETALQCAALTDNVTRLACYDRIFAAQLPSSAGQEGQ) are periplasmic. A beta stranded membrane pass occupies residues 66 to 78 (ESKAVLNLTETVR). Residues 79 to 168 (SSLDKGEAVI…VQEKFGQQKR (90 aa)) are Extracellular-facing. A beta stranded transmembrane segment spans residues 169–183 (AETKLQVSFKSKIAE). Residues 184-189 (DLFKTR) are Periplasmic-facing. The beta stranded transmembrane segment at 190 to 202 (ADLWFGYTQRSDW) threads the bilayer. Residues 203–213 (QIYNQGRKSAP) are Extracellular-facing. A Ca(2+)-binding site is contributed by S211. Residues 214–233 (FRNTDYKPEIFLTQPVKADL) traverse the membrane as a beta stranded segment. Residues 234-236 (PFG) are Periplasmic-facing. The chain crosses the membrane as a beta stranded span at residues 237–250 (GRLRMLGAGFVHQS). H248 acts as the Proton acceptor in catalysis. S250 (nucleophile) is an active-site residue. The Extracellular portion of the chain corresponds to 251-259 (NGQSRPESR). Ca(2+) is bound at residue S258. A beta stranded transmembrane segment spans residues 260-272 (SWNRIYAMAGMEW). The Periplasmic portion of the chain corresponds to 273-274 (GK). A beta stranded transmembrane segment spans residues 275–284 (LTVIPRVWVR). At 285–306 (AFDQSGDKNDNPDIADYMGYGD) the chain is on the extracellular side. D294 provides a ligand contact to Ca(2+). A beta stranded membrane pass occupies residues 307–313 (VKLQYRL). The Periplasmic segment spans residues 314–315 (ND). The chain crosses the membrane as a beta stranded span at residues 316–325 (RQNVYSVLRY). Residues 326–332 (NPKTGYG) are Extracellular-facing. A beta stranded membrane pass occupies residues 333 to 341 (AIEAAYTFP). At 342 to 346 (IKGKL) the chain is on the periplasmic side. A beta stranded membrane pass occupies residues 347-356 (KGVVRGFHGY). At 357-365 (GESLIDYNH) the chain is on the extracellular side. A beta stranded transmembrane segment spans residues 366 to 377 (KQNGIGIGLMFN). The Periplasmic portion of the chain corresponds to 378–382 (DLDGI).

This sequence belongs to the phospholipase A1 family. In terms of assembly, homodimer; dimerization is reversible, and the dimeric form is the active one. Ca(2+) is required as a cofactor.

It localises to the cell outer membrane. The enzyme catalyses a 1,2-diacyl-sn-glycero-3-phosphocholine + H2O = a 2-acyl-sn-glycero-3-phosphocholine + a fatty acid + H(+). It catalyses the reaction a 1,2-diacyl-sn-glycero-3-phosphocholine + H2O = a 1-acyl-sn-glycero-3-phosphocholine + a fatty acid + H(+). Its function is as follows. Hydrolysis of phosphatidylcholine with phospholipase A2 (EC 3.1.1.4) and phospholipase A1 (EC 3.1.1.32) activities. This chain is Putative phospholipase A1, found in Neisseria meningitidis serogroup B (strain ATCC BAA-335 / MC58).